Reading from the N-terminus, the 195-residue chain is Probable GTP-binding protein EngB (195 aa).

The EngB-type G domain occupies 24 to 195; the sequence is ELPEIALAGR…EAWDAILEKL (172 aa). Residues 32–39, 59–63, 77–80, 144–147, and 176–178 each bind GTP; these read GRSNVGKS, GKTQL, DVPG, TKAD, and FSS. Mg(2+)-binding residues include Ser39 and Thr61.

Belongs to the TRAFAC class TrmE-Era-EngA-EngB-Septin-like GTPase superfamily. EngB GTPase family. It depends on Mg(2+) as a cofactor.

Necessary for normal cell division and for the maintenance of normal septation. This is Probable GTP-binding protein EngB from Streptococcus pneumoniae (strain JJA).